A 142-amino-acid polypeptide reads, in one-letter code: Ribosome-binding factor A (142 aa).

Positions 119 to 142 (EAKQKQHGVETDAEQGDTKEEGDK) are disordered.

It belongs to the RbfA family. In terms of assembly, monomer. Binds 30S ribosomal subunits, but not 50S ribosomal subunits or 70S ribosomes.

The protein resides in the cytoplasm. Its function is as follows. One of several proteins that assist in the late maturation steps of the functional core of the 30S ribosomal subunit. Associates with free 30S ribosomal subunits (but not with 30S subunits that are part of 70S ribosomes or polysomes). Required for efficient processing of 16S rRNA. May interact with the 5'-terminal helix region of 16S rRNA. This is Ribosome-binding factor A from Shewanella pealeana (strain ATCC 700345 / ANG-SQ1).